Consider the following 205-residue polypeptide: Cerebellin-3 (205 aa).

The signal sequence occupies residues 1–32 (MLGAKPHWLPGPLHSPGLPLVLVLLALGAGWA). The region spanning 67-205 (APPGRVAFAA…SFSGFLIFPL (139 aa)) is the C1q domain. The interval 72-205 (VAFAAVRSHH…SFSGFLIFPL (134 aa)) is necessary for interaction with CBLN3, and homotrimerization. N-linked (GlcNAc...) asparagine glycosylation occurs at Asn90.

Heterohexamer; disulfide-linked heterotrimers. Interacts with CBLN1. May also form oligomers with CBLN2 and CBLN4.

The protein resides in the endoplasmic reticulum. Its subcellular location is the golgi apparatus. It localises to the cis-Golgi network. It is found in the secreted. The protein localises to the synapse. In terms of biological role, may be involved in synaptic functions in the CNS. This chain is Cerebellin-3 (CBLN3), found in Homo sapiens (Human).